We begin with the raw amino-acid sequence, 608 residues long: MEMRWFLSKIQDDFRGGKINLEKTQRLLEKLDIRCSYIHVKQIFKDNDRLKQGRITIEEFRAIYRIITHREEIIEIFNTYSENRKILLASNLAQFLTQEQYAAEMSKAIAFEIIQKYEPIEEVRKAHQMSLEGFTRYMDSRECLLFKNECRKVYQDMTHPLNDYFISSSHNTYLVSDQLLGPSDLWGYVSALVKGCRCLEIDCWDGAQNEPVVYHGYTLTSKLLFKTVIQAIHKYAFMTSDYPVVLSLENHCSTAQQEVMADNLQATFGESLLSDMLDDFPDTLPSPEALKFKILVKNKKIGTLKETHERKGSDKRGDNQDKETGVKKLPGVMLFKKKKTRKLKIALALSDLVIYTKAEKFKSFQHSRLYQQFNENNSIGETQARKLSKLRVHEFIFHTRKFITRIYPKATRADSSNFNPQEFWNIGCQMVALNFQTPGLPMDLQNGKFLDNGGSGYILKPHFLRESKSYFNPSNIKEGMPITLTIRLISGIQLPLTHSSSNKGDSLVIIEVFGVPNDQMKQQTRVIKKNAFSPRWNETFTFIIHVPELALIRFVVEGQGLIAGNEFLGQYTLPLLCMNKGYRRIPLFSRMGESLEPASLFVYVWYVR.

The EF-hand domain maps to 35 to 70 (CSYIHVKQIFKDNDRLKQGRITIEEFRAIYRIITHR). Positions 155-299 (QDMTHPLNDY…LKFKILVKNK (145 aa)) constitute a PI-PLC X-box domain. Active-site residues include H170 and H215. The disordered stretch occupies residues 305-324 (KETHERKGSDKRGDNQDKET). The PI-PLC Y-box domain maps to 349–465 (LSDLVIYTKA…GYILKPHFLR (117 aa)). In terms of domain architecture, C2 spans 465-589 (RESKSYFNPS…KGYRRIPLFS (125 aa)).

Interacts via its C2 domain with PtdIns(3)P and, to a lesser extent, PtdIns(5)P in vitro. Ca(2+) is required as a cofactor. As to expression, expressed specifically in testis and sperm. Weakly expressed in pancreatic-duct cells. Up-regulated in pancreatic-duct cells from patients with cystic fibrosis.

It localises to the nucleus. The protein localises to the cytoplasm. It is found in the perinuclear region. The enzyme catalyses a 1,2-diacyl-sn-glycero-3-phospho-(1D-myo-inositol-4,5-bisphosphate) + H2O = 1D-myo-inositol 1,4,5-trisphosphate + a 1,2-diacyl-sn-glycerol + H(+). In terms of biological role, the production of the second messenger molecules diacylglycerol (DAG) and inositol 1,4,5-trisphosphate (IP3) is mediated by activated phosphatidylinositol-specific phospholipase C enzymes. In vitro, hydrolyzes PtdIns(4,5)P2 in a Ca(2+)-dependent manner. Triggers intracellular Ca(2+) oscillations in oocytes solely during M phase and is involved in inducing oocyte activation and initiating embryonic development up to the blastocyst stage. Is therefore a strong candidate for the egg-activating soluble sperm factor that is transferred from the sperm into the egg cytoplasm following gamete membrane fusion. May exert an inhibitory effect on phospholipase-C-coupled processes that depend on calcium ions and protein kinase C, including CFTR trafficking and function. This is 1-phosphatidylinositol 4,5-bisphosphate phosphodiesterase zeta-1 from Homo sapiens (Human).